The chain runs to 923 residues: Lysosomal acid alpha-glucosidase (923 aa).

An N-terminal signal peptide occupies residues 1–17 (MKHQVLLPLLVTTAIIA). Residues 18-36 (GSVGVYTHSKPLLGQSQDQ) constitute a propeptide that is removed on maturation. N-linked (GlcNAc...) asparagine glycans are attached at residues asparagine 65, asparagine 405, and asparagine 440. The active-site Nucleophile is the aspartate 455. Residue glutamate 458 is part of the active site. Catalysis depends on aspartate 585, which acts as the Proton donor. N-linked (GlcNAc...) asparagine glycans are attached at residues asparagine 586, asparagine 621, asparagine 646, asparagine 848, asparagine 908, and asparagine 912.

Belongs to the glycosyl hydrolase 31 family.

Its subcellular location is the lysosome. It is found in the secreted. It catalyses the reaction Hydrolysis of terminal, non-reducing (1-&gt;4)-linked alpha-D-glucose residues with release of alpha-D-glucose.. Essential for the degradation of glycogen to glucose in lysosomes. Has both alpha-1,4 and alpha-1,6-glucosidase activity. This is Lysosomal acid alpha-glucosidase from Tetrahymena pyriformis.